The sequence spans 54 residues: ATP synthase F(0) complex subunit 8 (54 aa).

A helical transmembrane segment spans residues 4 to 24; the sequence is LNPGPWFAILVFSWLIFLTII. The tract at residues 35-54 is disordered; that stretch reads NEPTPVSAEKHKTESWDWPW. Basic and acidic residues predominate over residues 42-54; that stretch reads AEKHKTESWDWPW.

This sequence belongs to the ATPase protein 8 family. Component of the ATP synthase complex composed at least of ATP5F1A/subunit alpha, ATP5F1B/subunit beta, ATP5MC1/subunit c (homooctomer), MT-ATP6/subunit a, MT-ATP8/subunit 8, ATP5ME/subunit e, ATP5MF/subunit f, ATP5MG/subunit g, ATP5MK/subunit k, ATP5MJ/subunit j, ATP5F1C/subunit gamma, ATP5F1D/subunit delta, ATP5F1E/subunit epsilon, ATP5PF/subunit F6, ATP5PB/subunit b, ATP5PD/subunit d, ATP5PO/subunit OSCP. ATP synthase complex consists of a soluble F(1) head domain (subunits alpha(3) and beta(3)) - the catalytic core - and a membrane F(0) domain - the membrane proton channel (subunits c, a, 8, e, f, g, k and j). These two domains are linked by a central stalk (subunits gamma, delta, and epsilon) rotating inside the F1 region and a stationary peripheral stalk (subunits F6, b, d, and OSCP).

The protein resides in the mitochondrion membrane. In terms of biological role, subunit 8, of the mitochondrial membrane ATP synthase complex (F(1)F(0) ATP synthase or Complex V) that produces ATP from ADP in the presence of a proton gradient across the membrane which is generated by electron transport complexes of the respiratory chain. ATP synthase complex consist of a soluble F(1) head domain - the catalytic core - and a membrane F(1) domain - the membrane proton channel. These two domains are linked by a central stalk rotating inside the F(1) region and a stationary peripheral stalk. During catalysis, ATP synthesis in the catalytic domain of F(1) is coupled via a rotary mechanism of the central stalk subunits to proton translocation. In vivo, can only synthesize ATP although its ATP hydrolase activity can be activated artificially in vitro. Part of the complex F(0) domain. The protein is ATP synthase F(0) complex subunit 8 of Cyprinus carpio (Common carp).